Consider the following 395-residue polypeptide: Tryptophan synthase beta chain (395 aa).

Lys-89 is subject to N6-(pyridoxal phosphate)lysine.

The protein belongs to the TrpB family. In terms of assembly, tetramer of two alpha and two beta chains. Requires pyridoxal 5'-phosphate as cofactor.

The catalysed reaction is (1S,2R)-1-C-(indol-3-yl)glycerol 3-phosphate + L-serine = D-glyceraldehyde 3-phosphate + L-tryptophan + H2O. The protein operates within amino-acid biosynthesis; L-tryptophan biosynthesis; L-tryptophan from chorismate: step 5/5. In terms of biological role, the beta subunit is responsible for the synthesis of L-tryptophan from indole and L-serine. The sequence is that of Tryptophan synthase beta chain from Fusobacterium nucleatum subsp. nucleatum (strain ATCC 25586 / DSM 15643 / BCRC 10681 / CIP 101130 / JCM 8532 / KCTC 2640 / LMG 13131 / VPI 4355).